The sequence spans 231 residues: uncharacterized protein (231 aa).

10–34 (VVTGAGSGIGEAIATLLHEEGAKVV) contacts NADP(+). Ser140 provides a ligand contact to substrate. Residue Tyr153 is the Proton acceptor of the active site.

The protein belongs to the short-chain dehydrogenases/reductases (SDR) family.

This is an uncharacterized protein from Staphylococcus aureus (strain COL).